The following is a 373-amino-acid chain: Citrate synthase (373 aa).

Active-site residues include His-262 and Asp-314.

Belongs to the citrate synthase family. In terms of assembly, homohexamer.

The catalysed reaction is oxaloacetate + acetyl-CoA + H2O = citrate + CoA + H(+). The protein operates within carbohydrate metabolism; tricarboxylic acid cycle; isocitrate from oxaloacetate: step 1/2. The sequence is that of Citrate synthase (ctsA) from Heyndrickxia coagulans (Weizmannia coagulans).